The sequence spans 567 residues: Urease subunit alpha (567 aa).

One can recognise a Urease domain in the interval 129-567 (GGIDTHIHFI…LPMAQRYFLF (439 aa)). 3 residues coordinate Ni(2+): His-134, His-136, and Lys-217. Lys-217 carries the N6-carboxylysine modification. His-219 is a substrate binding site. Residues His-246 and His-272 each contribute to the Ni(2+) site. Residue His-320 is the Proton donor of the active site. A Ni(2+)-binding site is contributed by Asp-360.

The protein belongs to the metallo-dependent hydrolases superfamily. Urease alpha subunit family. As to quaternary structure, heterotrimer of UreA (gamma), UreB (beta) and UreC (alpha) subunits. Three heterotrimers associate to form the active enzyme. Ni cation serves as cofactor. In terms of processing, carboxylation allows a single lysine to coordinate two nickel ions.

Its subcellular location is the cytoplasm. The enzyme catalyses urea + 2 H2O + H(+) = hydrogencarbonate + 2 NH4(+). It participates in nitrogen metabolism; urea degradation; CO(2) and NH(3) from urea (urease route): step 1/1. The polypeptide is Urease subunit alpha (Delftia acidovorans (strain DSM 14801 / SPH-1)).